Here is a 186-residue protein sequence, read N- to C-terminus: Transcription factor HES-3 (186 aa).

The bHLH domain occupies 1 to 49; sequence MEKKRRARINVSLEQLKSLLEKHYSHQIRKRKLEKADILELSVKYMRSL. Residues 65–99 form the Orange domain; it reads QPSGFRSCLPGVSQLLRRGDEVGSGLRCPLVPESA. The interval 128–186 is disordered; it reads APAAGGPRSPPPLLLLPESLPGSSASVPPPQPASSRCAESPGLGLRVWRPWGSPGDDLN. Over residues 142–153 the composition is skewed to low complexity; sequence LLPESLPGSSAS. The WRPW motif motif lies at 175-178; that stretch reads WRPW.

Transcription repression requires formation of a complex with a corepressor protein of the Groucho/TLE family.

Its subcellular location is the nucleus. Its function is as follows. Transcriptional repressor of genes that require a bHLH protein for their transcription. This chain is Transcription factor HES-3 (HES3), found in Homo sapiens (Human).